The sequence spans 433 residues: 23S rRNA (uracil(1939)-C(5))-methyltransferase RlmD (433 aa).

Residues 1-53 form the TRAM domain; sequence MPTAVIESLDHEGRGIARVEGKAVFIEGGLPGETVEYRVLRSKPNYEQAEATR. [4Fe-4S] cluster is bound by residues Cys66, Cys72, Cys75, and Cys154. Residues Gln263, Phe292, Asn297, Glu313, Asn341, and Asp362 each contribute to the S-adenosyl-L-methionine site. Cys389 serves as the catalytic Nucleophile.

Belongs to the class I-like SAM-binding methyltransferase superfamily. RNA M5U methyltransferase family. RlmD subfamily.

The catalysed reaction is uridine(1939) in 23S rRNA + S-adenosyl-L-methionine = 5-methyluridine(1939) in 23S rRNA + S-adenosyl-L-homocysteine + H(+). In terms of biological role, catalyzes the formation of 5-methyl-uridine at position 1939 (m5U1939) in 23S rRNA. This Azoarcus sp. (strain BH72) protein is 23S rRNA (uracil(1939)-C(5))-methyltransferase RlmD.